A 346-amino-acid chain; its full sequence is Glycerol-3-phosphate dehydrogenase [NAD(P)+] (346 aa).

4 residues coordinate NADPH: S15, W16, R36, and K110. Residues K110, G139, and S141 each coordinate sn-glycerol 3-phosphate. Residue A143 coordinates NADPH. Residues K194, D247, S257, R258, and N259 each coordinate sn-glycerol 3-phosphate. The active-site Proton acceptor is the K194. R258 contributes to the NADPH binding site. V282 and E284 together coordinate NADPH.

The protein belongs to the NAD-dependent glycerol-3-phosphate dehydrogenase family.

The protein resides in the cytoplasm. It catalyses the reaction sn-glycerol 3-phosphate + NAD(+) = dihydroxyacetone phosphate + NADH + H(+). The enzyme catalyses sn-glycerol 3-phosphate + NADP(+) = dihydroxyacetone phosphate + NADPH + H(+). The protein operates within membrane lipid metabolism; glycerophospholipid metabolism. Catalyzes the reduction of the glycolytic intermediate dihydroxyacetone phosphate (DHAP) to sn-glycerol 3-phosphate (G3P), the key precursor for phospholipid synthesis. This is Glycerol-3-phosphate dehydrogenase [NAD(P)+] from Xylella fastidiosa (strain Temecula1 / ATCC 700964).